The primary structure comprises 517 residues: ATP synthase subunit alpha (517 aa).

Position 173–180 (173–180 (GDRQTGKT)) interacts with ATP.

It belongs to the ATPase alpha/beta chains family. As to quaternary structure, F-type ATPases have 2 components, CF(1) - the catalytic core - and CF(0) - the membrane proton channel. CF(1) has five subunits: alpha(3), beta(3), gamma(1), delta(1), epsilon(1). CF(0) has three main subunits: a(1), b(2) and c(9-12). The alpha and beta chains form an alternating ring which encloses part of the gamma chain. CF(1) is attached to CF(0) by a central stalk formed by the gamma and epsilon chains, while a peripheral stalk is formed by the delta and b chains.

The protein resides in the cell inner membrane. The catalysed reaction is ATP + H2O + 4 H(+)(in) = ADP + phosphate + 5 H(+)(out). Its function is as follows. Produces ATP from ADP in the presence of a proton gradient across the membrane. The alpha chain is a regulatory subunit. This Legionella pneumophila (strain Lens) protein is ATP synthase subunit alpha.